The following is a 196-amino-acid chain: Potassium-transporting ATPase KdpC subunit (196 aa).

Residues 17-37 (LLLLVATAGLGLVYPLAVFAV) traverse the membrane as a helical segment. The interval 73 to 93 (QPRPSAAGDGYDPTASGASNL) is disordered.

Belongs to the KdpC family. The system is composed of three essential subunits: KdpA, KdpB and KdpC.

It localises to the cell membrane. Its function is as follows. Part of the high-affinity ATP-driven potassium transport (or Kdp) system, which catalyzes the hydrolysis of ATP coupled with the electrogenic transport of potassium into the cytoplasm. This subunit acts as a catalytic chaperone that increases the ATP-binding affinity of the ATP-hydrolyzing subunit KdpB by the formation of a transient KdpB/KdpC/ATP ternary complex. This chain is Potassium-transporting ATPase KdpC subunit, found in Kineococcus radiotolerans (strain ATCC BAA-149 / DSM 14245 / SRS30216).